The following is a 280-amino-acid chain: uncharacterized protein (280 aa).

4 CBS domains span residues 10-67 (QNKK…GSKY), 90-146 (MEEN…KIDE), 154-209 (ITRD…DWAF), and 229-280 (MKRD…KYFA).

This is an uncharacterized protein from Methanocaldococcus jannaschii (strain ATCC 43067 / DSM 2661 / JAL-1 / JCM 10045 / NBRC 100440) (Methanococcus jannaschii).